Reading from the N-terminus, the 192-residue chain is uncharacterized protein (192 aa).

The Nudix hydrolase domain maps to 29-160 (QRQAAVLVPI…PLDIERKQQR (132 aa)). A Nudix box motif is present at residues 67 to 89 (GAADKTDRSIIETALREAQEEVA). E83 and E87 together coordinate Mg(2+).

Belongs to the Nudix hydrolase family. PCD1 subfamily. It depends on Mn(2+) as a cofactor. Mg(2+) is required as a cofactor.

Probably mediates the hydrolysis of some nucleoside diphosphate derivatives. This is an uncharacterized protein from Pectobacterium atrosepticum (strain SCRI 1043 / ATCC BAA-672) (Erwinia carotovora subsp. atroseptica).